We begin with the raw amino-acid sequence, 267 residues long: MPADLMEKNSSSPVAATPASMSNTPDKPKTASEHRKSSKPIMEKRRRARINESLGQLKTLILDALKKDSSRHSKLEKADILEMTVKHLRNLQRVQMTAALSTDPSVLGKYRAGFSECMNEVTRFLSTCEGVNTDVRTRLLGHLANCMNQINAMNYPTQPQIPAAAAPHPAYGQPLVQLQGAAPQSSPAPIACKMGGPPVEAAKVYGGFQLVPAPDGQFAFLITNPAFPHNGSVIPVYTNSNVGTALPPSVSPSVMPSVTADSVWRPW.

Residues 1-45 (MPADLMEKNSSSPVAATPASMSNTPDKPKTASEHRKSSKPIMEKR) are disordered. Polar residues predominate over residues 8–25 (KNSSSPVAATPASMSNTP). Residues 26–35 (DKPKTASEHR) show a composition bias toward basic and acidic residues. The bHLH domain occupies 34 to 91 (HRKSSKPIMEKRRRARINESLGQLKTLILDALKKDSSRHSKLEKADILEMTVKHLRNL). The 34-residue stretch at 110-143 (YRAGFSECMNEVTRFLSTCEGVNTDVRTRLLGHL) folds into the Orange domain. The WRPW motif motif lies at 264 to 267 (WRPW).

Transcription repression requires formation of a complex with a corepressor protein of the Groucho/TLE family. Interacts with the bHLH protein hes2, and binds DNA in the form of a heterodimer with the bHLH protein hey1/hrt1. Interacts with the bHLH protein hes6; this interaction may inhibit the transcriptional repressor activity.

It localises to the nucleus. Its function is as follows. Transcriptional repressor of a subset of early mesodermal genes including myod1 and t/bra. Binds DNA on N-box motifs: 5'-CACNAG-3'. Acts as a negative regulator of myogenesis, mediating Notch signaling to repress expression of myod1. This Xenopus tropicalis (Western clawed frog) protein is Transcription factor HES-1.